The chain runs to 445 residues: Methylthioribose-1-phosphate isomerase (445 aa).

The active-site Proton donor is aspartate 286.

The protein belongs to the eIF-2B alpha/beta/delta subunits family. MtnA subfamily.

The protein localises to the cytoplasm. Its subcellular location is the nucleus. It catalyses the reaction 5-(methylsulfanyl)-alpha-D-ribose 1-phosphate = 5-(methylsulfanyl)-D-ribulose 1-phosphate. It functions in the pathway amino-acid biosynthesis; L-methionine biosynthesis via salvage pathway; L-methionine from S-methyl-5-thio-alpha-D-ribose 1-phosphate: step 1/6. Its function is as follows. Catalyzes the interconversion of methylthioribose-1-phosphate (MTR-1-P) into methylthioribulose-1-phosphate (MTRu-1-P). The chain is Methylthioribose-1-phosphate isomerase (mri1) from Sclerotinia sclerotiorum (strain ATCC 18683 / 1980 / Ss-1) (White mold).